The primary structure comprises 616 residues: Glutamine--fructose-6-phosphate aminotransferase [isomerizing] (616 aa).

Cys-2 (nucleophile; for GATase activity) is an active-site residue. The region spanning 2–222 is the Glutamine amidotransferase type-2 domain; that stretch reads CGIIGYSGPR…QERIVALSGD (221 aa). A disordered region spans residues 70–89; it reads TGIGHTRWATHGEPSDRNAH. 2 SIS domains span residues 289-428 and 461-606; these read IRDD…LRGF and LAHW…VDRP. The active-site For Fru-6P isomerization activity is Lys-611.

Homodimer.

It localises to the cytoplasm. The catalysed reaction is D-fructose 6-phosphate + L-glutamine = D-glucosamine 6-phosphate + L-glutamate. In terms of biological role, catalyzes the first step in hexosamine metabolism, converting fructose-6P into glucosamine-6P using glutamine as a nitrogen source. The chain is Glutamine--fructose-6-phosphate aminotransferase [isomerizing] from Tropheryma whipplei (strain TW08/27) (Whipple's bacillus).